A 255-amino-acid polypeptide reads, in one-letter code: Reticulon-like protein B3 (255 aa).

The span at 1 to 25 (MAEEHKHEESIMEKISEKIHGHDDS) shows a compositional bias: basic and acidic residues. Residues 1 to 38 (MAEEHKHEESIMEKISEKIHGHDDSSSSSSDSDDDKNS) are disordered. A2 carries the N-acetylalanine modification. Residues 64–255 (PADIFLWRNK…GAFAFIKKKD (192 aa)) enclose the Reticulon domain. Transmembrane regions (helical) follow at residues 75–95 (VSGGVLGAATVSWILFELLEY), 97–117 (LLTLFGHISILALAVLFLWSS), and 186–206 (CNFLTLIYIATVLLFTIPVLY).

It localises to the endoplasmic reticulum membrane. The protein localises to the vacuole membrane. This chain is Reticulon-like protein B3 (RTNLB3), found in Arabidopsis thaliana (Mouse-ear cress).